The following is a 65-amino-acid chain: Large ribosomal subunit protein bL35 (65 aa).

This sequence belongs to the bacterial ribosomal protein bL35 family.

In Psychrobacter arcticus (strain DSM 17307 / VKM B-2377 / 273-4), this protein is Large ribosomal subunit protein bL35.